A 376-amino-acid chain; its full sequence is Phytanoyl-CoA hydroxylase-interacting protein-like (376 aa).

A phosphoserine mark is found at serine 12 and serine 15. Residue asparagine 23 is glycosylated (N-linked (GlcNAc...) asparagine). Residue serine 25 is modified to Phosphoserine. A glycan (N-linked (GlcNAc...) asparagine) is linked at asparagine 37. A Fibronectin type-III domain is found at 52–161 (VPHNIKISNI…EIIEFCTADY (110 aa)).

Belongs to the PHYHIP family.

Functionally, may play a role in the development of the central system. The polypeptide is Phytanoyl-CoA hydroxylase-interacting protein-like (PHYHIPL) (Homo sapiens (Human)).